The primary structure comprises 736 residues: Catalase-peroxidase 2 (736 aa).

The tryptophyl-tyrosyl-methioninium (Trp-Tyr) (with M-253) cross-link spans 91 to 227; the sequence is WHSAGTYRMG…LAAVQMGLIY (137 aa). His-92 (proton acceptor) is an active-site residue. Positions 227-253 form a cross-link, tryptophyl-tyrosyl-methioninium (Tyr-Met) (with W-91); it reads YVNPEGPDGNPDPVAAAYDIREVFGRM. Residue His-268 participates in heme b binding.

It belongs to the peroxidase family. Peroxidase/catalase subfamily. As to quaternary structure, homodimer or homotetramer. Heme b serves as cofactor. Formation of the three residue Trp-Tyr-Met cross-link is important for the catalase, but not the peroxidase activity of the enzyme.

It carries out the reaction H2O2 + AH2 = A + 2 H2O. It catalyses the reaction 2 H2O2 = O2 + 2 H2O. Bifunctional enzyme with both catalase and broad-spectrum peroxidase activity. Shows peroxidase specificity towards odianisidine, ABTS and pyrogallol, but methoxyphenol and 2-chloronaphthol are not peroxidized. The polypeptide is Catalase-peroxidase 2 (Burkholderia cenocepacia (strain ATCC BAA-245 / DSM 16553 / LMG 16656 / NCTC 13227 / J2315 / CF5610) (Burkholderia cepacia (strain J2315))).